The following is a 425-amino-acid chain: Serine--tRNA ligase (425 aa).

228-230 contributes to the L-serine binding site; sequence TAE. An ATP-binding site is contributed by 259-261; it reads RSE. Glutamate 282 lines the L-serine pocket. Position 346 to 349 (346 to 349) interacts with ATP; that stretch reads EIAS. Residue serine 382 coordinates L-serine.

This sequence belongs to the class-II aminoacyl-tRNA synthetase family. Type-1 seryl-tRNA synthetase subfamily. As to quaternary structure, homodimer. The tRNA molecule binds across the dimer.

The protein localises to the cytoplasm. It carries out the reaction tRNA(Ser) + L-serine + ATP = L-seryl-tRNA(Ser) + AMP + diphosphate + H(+). It catalyses the reaction tRNA(Sec) + L-serine + ATP = L-seryl-tRNA(Sec) + AMP + diphosphate + H(+). It participates in aminoacyl-tRNA biosynthesis; selenocysteinyl-tRNA(Sec) biosynthesis; L-seryl-tRNA(Sec) from L-serine and tRNA(Sec): step 1/1. Functionally, catalyzes the attachment of serine to tRNA(Ser). Is also able to aminoacylate tRNA(Sec) with serine, to form the misacylated tRNA L-seryl-tRNA(Sec), which will be further converted into selenocysteinyl-tRNA(Sec). The sequence is that of Serine--tRNA ligase from Rickettsia canadensis (strain McKiel).